We begin with the raw amino-acid sequence, 348 residues long: Flap endonuclease 1 (348 aa).

The interval 1–98 is N-domain; the sequence is MGLAELRELI…ETLERRRERK (98 aa). Mg(2+)-binding residues include Asp28, Asp80, Glu149, Glu151, Asp170, Asp172, and Asp234. The I-domain stretch occupies residues 113 to 256; that stretch reads EREKYARQVA…RALQLIRKYG (144 aa). The tract at residues 340 to 348 is interaction with PCNA; it reads RQETLDAFF.

Belongs to the XPG/RAD2 endonuclease family. FEN1 subfamily. In terms of assembly, interacts with PCNA. PCNA stimulates the nuclease activity without altering cleavage specificity. Requires Mg(2+) as cofactor.

In terms of biological role, structure-specific nuclease with 5'-flap endonuclease and 5'-3' exonuclease activities involved in DNA replication and repair. During DNA replication, cleaves the 5'-overhanging flap structure that is generated by displacement synthesis when DNA polymerase encounters the 5'-end of a downstream Okazaki fragment. Binds the unpaired 3'-DNA end and kinks the DNA to facilitate 5' cleavage specificity. Cleaves one nucleotide into the double-stranded DNA from the junction in flap DNA, leaving a nick for ligation. Also involved in the base excision repair (BER) pathway. Acts as a genome stabilization factor that prevents flaps from equilibrating into structures that lead to duplications and deletions. Also possesses 5'-3' exonuclease activity on nicked or gapped double-stranded DNA. This chain is Flap endonuclease 1, found in Methanopyrus kandleri (strain AV19 / DSM 6324 / JCM 9639 / NBRC 100938).